The chain runs to 142 residues: Large ribosomal subunit protein uL13 (142 aa).

This sequence belongs to the universal ribosomal protein uL13 family. As to quaternary structure, part of the 50S ribosomal subunit.

Its function is as follows. This protein is one of the early assembly proteins of the 50S ribosomal subunit, although it is not seen to bind rRNA by itself. It is important during the early stages of 50S assembly. In Pseudomonas syringae pv. syringae (strain B728a), this protein is Large ribosomal subunit protein uL13.